The primary structure comprises 112 residues: MGVEKQVISSGNGQDFPKPGDRITMHYTGTLTNGKKFDSSVDRGSPFVCTIGVGQLIRGWDEGVPKMSLGEKAKLTITPDYGYGPRGFPGLIPPNSTLLFDVELLAINDKKA.

Positions 1–22 (MGVEKQVISSGNGQDFPKPGDR) are disordered. Positions 20–108 (GDRITMHYTG…LFDVELLAIN (89 aa)) constitute a PPIase FKBP-type domain.

Belongs to the FKBP-type PPIase family. FKBP1 subfamily.

The protein localises to the cytoplasm. It localises to the nucleus. The catalysed reaction is [protein]-peptidylproline (omega=180) = [protein]-peptidylproline (omega=0). Its function is as follows. PPIases accelerate the folding of proteins. It catalyzes the cis-trans isomerization of proline imidic peptide bonds in oligopeptides. Has an important role in sexual development and serves as the target for rapamycin action. In Schizosaccharomyces pombe (strain 972 / ATCC 24843) (Fission yeast), this protein is Peptidyl-prolyl cis-trans isomerase (fkh1).